Reading from the N-terminus, the 356-residue chain is Protein RecA (356 aa).

75–82 (GPESSGKT) serves as a coordination point for ATP.

It belongs to the RecA family.

The protein localises to the cytoplasm. Its function is as follows. Can catalyze the hydrolysis of ATP in the presence of single-stranded DNA, the ATP-dependent uptake of single-stranded DNA by duplex DNA, and the ATP-dependent hybridization of homologous single-stranded DNAs. It interacts with LexA causing its activation and leading to its autocatalytic cleavage. In Burkholderia mallei (strain ATCC 23344), this protein is Protein RecA.